Here is a 306-residue protein sequence, read N- to C-terminus: Recombination-associated protein RdgC (306 aa).

This sequence belongs to the RdgC family.

The protein resides in the cytoplasm. It localises to the nucleoid. Its function is as follows. May be involved in recombination. This chain is Recombination-associated protein RdgC, found in Pseudomonas putida (strain ATCC 47054 / DSM 6125 / CFBP 8728 / NCIMB 11950 / KT2440).